We begin with the raw amino-acid sequence, 310 residues long: Ribosomal RNA small subunit methyltransferase H (310 aa).

S-adenosyl-L-methionine contacts are provided by residues 35–37 (GGH), aspartate 52, phenylalanine 79, aspartate 100, and glutamine 107.

It belongs to the methyltransferase superfamily. RsmH family.

The protein resides in the cytoplasm. It carries out the reaction cytidine(1402) in 16S rRNA + S-adenosyl-L-methionine = N(4)-methylcytidine(1402) in 16S rRNA + S-adenosyl-L-homocysteine + H(+). In terms of biological role, specifically methylates the N4 position of cytidine in position 1402 (C1402) of 16S rRNA. In Anaeromyxobacter sp. (strain K), this protein is Ribosomal RNA small subunit methyltransferase H.